The chain runs to 238 residues: Major prion protein (238 aa).

An N-terminal signal peptide occupies residues M1–C15. The interaction with GRB2, ERI3 and SYN1 stretch occupies residues K16 to S215. The disordered stretch occupies residues R18 to S93. 4 tandem repeats follow at residues P44 to Q52, P53 to Q60, P61 to Q68, and P69 to Q76. The tract at residues P44 to Q76 is 4 X 8 AA tandem repeats of P-H-G-G-G-W-G-Q. The segment covering Q45 to T80 has biased composition (gly residues). Residues G47, G48, H54, G55, G56, H62, G63, G64, H70, G71, and G72 each contribute to the Cu(2+) site. Basic residues predominate over residues Q83–S93. C164 and C199 are joined by a disulfide. Residues N166 and N182 are each glycosylated (N-linked (GlcNAc...) asparagine). S215 carries GPI-anchor amidated serine lipidation. A propeptide spans S216–G238 (removed in mature form).

The protein belongs to the prion family. In terms of assembly, monomer and homodimer. Has a tendency to aggregate into amyloid fibrils containing a cross-beta spine, formed by a steric zipper of superposed beta-strands. Soluble oligomers may represent an intermediate stage on the path to fibril formation. Copper binding may promote oligomerization. Interacts with GRB2, APP, ERI3/PRNPIP and SYN1. Mislocalized cytosolically exposed PrP interacts with MGRN1; this interaction alters MGRN1 subcellular location and causes lysosomal enlargement. Interacts with KIAA1191.

It is found in the cell membrane. Its subcellular location is the golgi apparatus. In terms of biological role, its primary physiological function is unclear. Has cytoprotective activity against internal or environmental stresses. May play a role in neuronal development and synaptic plasticity. May be required for neuronal myelin sheath maintenance. May play a role in iron uptake and iron homeostasis. Soluble oligomers are toxic to cultured neuroblastoma cells and induce apoptosis (in vitro). Association with GPC1 (via its heparan sulfate chains) targets PRNP to lipid rafts. Also provides Cu(2+) or Zn(2+) for the ascorbate-mediated GPC1 deaminase degradation of its heparan sulfate side chains. This chain is Major prion protein (PRNP), found in Macaca sylvanus (Barbary macaque).